The sequence spans 592 residues: V-type ATP synthase alpha chain (592 aa).

233–240 (GPFGSGKT) lines the ATP pocket.

This sequence belongs to the ATPase alpha/beta chains family.

The catalysed reaction is ATP + H2O + 4 H(+)(in) = ADP + phosphate + 5 H(+)(out). Produces ATP from ADP in the presence of a proton gradient across the membrane. The V-type alpha chain is a catalytic subunit. In Clostridium botulinum (strain Okra / Type B1), this protein is V-type ATP synthase alpha chain.